Consider the following 186-residue polypeptide: Protein C (186 aa).

Over residues 1–15 (MSKTDWNASGLSRPS) the composition is skewed to polar residues. Positions 1–44 (MSKTDWNASGLSRPSPSAHWPSRKLWQHGQKYQTTQDRSEPPAG) are disordered.

This sequence belongs to the morbillivirus protein C family. Interacts with the phosphoprotein (via C-terminus); this interaction allows C to associate with the ribonucleocapsid.

It localises to the host nucleus. The protein localises to the host cytoplasmic vesicle. Ribonucleocapsid-associated protein that interacts with the phosphoprotein (P), thereby increasing replication accuracy and processivity of the polymerase complex. The protein is Protein C (P/V/C) of Homo sapiens (Human).